A 59-amino-acid chain; its full sequence is Conotoxin ViVB (59 aa).

An N-terminal signal peptide occupies residues 1 to 22; that stretch reads MRCVPVFIILLLLIPSAPSAAV. Positions 23 to 46 are excised as a propeptide; it reads QPKTEKDDVPLASFHDSAMRILSR. Position 47 is a pyrrolidone carboxylic acid (Gln-47). Val-58 is subject to Valine amide.

In terms of processing, contains 2 disulfide bonds that can be either 'C1-C3, C2-C4' or 'C1-C4, C2-C3', since these disulfide connectivities have been observed for conotoxins with cysteine framework V (for examples, see AC P0DQQ7 and AC P81755). Expressed by the venom duct.

Its subcellular location is the secreted. The sequence is that of Conotoxin ViVB from Conus virgo (Virgin cone).